The following is a 553-amino-acid chain: Mucolipin-3 (553 aa).

The Cytoplasmic portion of the chain corresponds to 1 to 62; it reads MANPEVLVSS…FWARGRKPWK (62 aa). Positions 52–62 are interaction with phosphoinositides; it reads KFWARGRKPWK. The helical transmembrane segment at 63 to 83 threads the bilayer; the sequence is LAIQILKIAMVTIQLVLFGLS. The Extracellular segment spans residues 84 to 283; sequence NQMVVAFKEE…VSGSIQKNTH (200 aa). The tract at residues 104–118 is extracellular/lumenal pore loop; that stretch reads KGYMDRMDDTYAVYT. N138 carries an N-linked (GlcNAc...) asparagine glycan. The cysteines at positions 159 and 185 are disulfide-linked. N205 is a glycosylation site (N-linked (GlcNAc...) asparagine). C238 and C269 form a disulfide bridge. The helical transmembrane segment at 284 to 304 threads the bilayer; sequence YMMIFDAFVILTCLASLVLCA. Residues 305–341 are Cytoplasmic-facing; that stretch reads RSVIRGLQLQQEFVNFFLLHYKKEVSASDQMEFINGW. Residues 342-362 form a helical membrane-spanning segment; it reads YIMIIISDILTIVGSVLKMEI. Over 363 to 371 the chain is Extracellular; sequence QAKSLTSYD. A helical membrane pass occupies residues 372-392; sequence VCSILLGTSTMLVWLGVIRYL. Over 393–414 the chain is Cytoplasmic; the sequence is GFFAKYNLLILTLQAALPNVMR. The chain crosses the membrane as a helical span at residues 415 to 435; it reads FCCCAAMIYLGYCFCGWIVLG. Over 436–443 the chain is Extracellular; it reads PYHEKFRS. Residues 444-464 constitute an intramembrane region (pore-forming); sequence LNRVSECLFSLINGDDMFSTF. Residues 456-459 carry the Selectivity filter motif; it reads NGDD. Residues 465-475 are Extracellular-facing; sequence AKMQQKSYLVW. The chain crosses the membrane as a helical span at residues 476–497; it reads LFSRVYLYSFISLFIYMILSLF. At 498 to 553 the chain is on the cytoplasmic side; it reads IALITDTYETIKHYQQDGFPETELRKFIAECKDLPNSGKYRLEDDPPGSLLCCCKK.

It belongs to the transient receptor (TC 1.A.4) family. Polycystin subfamily. MCOLN3 sub-subfamily. Homotetramer. Can heterooligomerize with MCOLN1; heteromeric assemblies have different channel properties as compared to the respective homooligomers and may be tissue-specific. May heterooligomerize with TRPV5 to form a functional distinct ion channel. Interacts with GABARAPL2. Post-translationally, N-glycosylated. As to expression, expressed in the cochlea; particularly in the inner and outer hair cells (at protein level).

The protein localises to the early endosome membrane. It is found in the late endosome membrane. The protein resides in the cytoplasmic vesicle. It localises to the autophagosome membrane. Its subcellular location is the cell projection. The protein localises to the stereocilium membrane. The enzyme catalyses Ca(2+)(in) = Ca(2+)(out). It catalyses the reaction Mg(2+)(in) = Mg(2+)(out). It carries out the reaction K(+)(in) = K(+)(out). The catalysed reaction is Na(+)(in) = Na(+)(out). With respect to regulation, channel activity is activated by PtdIns(3,5)P2 (phosphatidylinositol 3,5-bisphosphate). Inhibited by lumenal H(+) and Na(+). The channel pore shows dynamic behavior and undergoes spontaneous, Ca(2+)-dependent modulation when conducting Ca(2+). Functionally, nonselective cation channel probably playing a role in the regulation of membrane trafficking events. Acts as a Ca(2+)-permeable cation channel with inwardly rectifying activity. Mediates release of Ca(2+) from endosomes to the cytoplasm, contributes to endosomal acidification and is involved in the regulation of membrane trafficking and fusion in the endosomal pathway. Also permeable to Mg(2+), Na(+) and K(+). Does not seem to act as mechanosensory transduction channel in inner ear sensory hair cells. Proposed to play a critical role at the cochlear stereocilia ankle-link region during hair-bundle growth. Involved in the regulation of autophagy. Through association with GABARAPL2 may be involved in autophagosome formation possibly providing Ca(2+) for the fusion process. Through a possible and probably tissue-specific heteromerization with MCOLN1 may be at least in part involved in many lysosome-dependent cellular events. Possible heteromeric ion channel assemblies with TRPV5 show pharmacological similarity with TRPML3. The sequence is that of Mucolipin-3 (Mcoln3) from Mus musculus (Mouse).